The chain runs to 334 residues: UDP-N-acetylglucosamine 4,6-dehydratase (inverting) (334 aa).

NADP(+) contacts are provided by residues 13–16, 37–42, 61–62, Ala81, Lys85, and 123–124; these read TGSF, SRDELK, DV, and LS. Lys85 contributes to the substrate binding site. Lys127 is an active-site residue. 2 residues coordinate NADP(+): Tyr135 and Lys139. Residue Asn167 participates in substrate binding. NADP(+) is bound at residue 168-172; that stretch reads VVGSR. 4 residues coordinate substrate: Val175, Thr193, Arg252, and Glu255.

Belongs to the polysaccharide synthase family. In terms of assembly, homohexamer. Requires NADP(+) as cofactor.

The enzyme catalyses UDP-N-acetyl-alpha-D-glucosamine = UDP-2-acetamido-2,6-dideoxy-beta-L-arabino-hex-4-ulose + H2O. Its function is as follows. Catalyzes the first step in the biosynthesis of pseudaminic acid, a sialic-acid-like sugar that is used to modify flagellin. Has both C6 dehydratase and C5 epimerase activities that result in the production of both UDP-2-acetamido-2,6-dideoxy-beta-L-arabino-4-hexulose and UDP-2-acetamido-2,6-dideoxy-alpha-D-xylo-4-hexulose. This chain is UDP-N-acetylglucosamine 4,6-dehydratase (inverting) (pseB), found in Campylobacter jejuni subsp. jejuni serotype O:2 (strain ATCC 700819 / NCTC 11168).